We begin with the raw amino-acid sequence, 231 residues long: Small ribosomal subunit protein uS3 (231 aa).

The KH type-2 domain maps to V39–R107.

Belongs to the universal ribosomal protein uS3 family. Part of the 30S ribosomal subunit. Forms a tight complex with proteins S10 and S14.

Functionally, binds the lower part of the 30S subunit head. Binds mRNA in the 70S ribosome, positioning it for translation. The sequence is that of Small ribosomal subunit protein uS3 from Colwellia psychrerythraea (strain 34H / ATCC BAA-681) (Vibrio psychroerythus).